A 238-amino-acid chain; its full sequence is Small proline-rich protein 3 (238 aa).

Positions 1 to 67 (MSSYQQKQPF…CSTKVPEPGN (67 aa)) are disordered. Serine 2 is subject to N-acetylserine. A run of 21 repeats spans residues 52–59 (TKIPEPCS), 60–67 (TKVPEPGN), 68–75 (TVVLEPDY), 76–83 (TTMPGPCS), 84–91 (TNITEPDY), 92–99 (TTIPGPCS), 100–107 (TNITEPDY), 108–115 (TTIPGPCS), 116–123 (TNIPGPDR), 124–131 (TVVPGSCS), 132–139 (TNITEPDY), 140–147 (TTIPGPSS), 148–155 (TKIPDPGC), 156–163 (AMVPGPSP), 164–175 (SSTSEPSSEPCS), 176–183 (INVREPGY), 184–191 (MNASEPTH), 192–199 (AKVPDQGY), 200–207 (TKIPDQGS), 208–215 (SKVPEPCQ), and 216–223 (SRVPEVCP). The segment at 52 to 223 (TKIPEPCSTK…CQSRVPEVCP (172 aa)) is 21 X 8 AA approximate tandem repeats. Positions 110–238 (IPGPCSTNIP…VSAKQKTKQK (129 aa)) are disordered. Low complexity predominate over residues 163-175 (PSSTSEPSSEPCS).

Belongs to the cornifin (SPRR) family.

Its subcellular location is the cytoplasm. Functionally, cross-linked envelope protein of keratinocytes. This Mus musculus (Mouse) protein is Small proline-rich protein 3 (Sprr3).